Consider the following 248-residue polypeptide: Probable transcriptional regulatory protein Mnod_7401 (248 aa).

It belongs to the TACO1 family.

The protein resides in the cytoplasm. The chain is Probable transcriptional regulatory protein Mnod_7401 from Methylobacterium nodulans (strain LMG 21967 / CNCM I-2342 / ORS 2060).